The sequence spans 221 residues: Deoxyribose-phosphate aldolase (221 aa).

The active-site Proton donor/acceptor is aspartate 90. Lysine 152 functions as the Schiff-base intermediate with acetaldehyde in the catalytic mechanism. The Proton donor/acceptor role is filled by lysine 181.

The protein belongs to the DeoC/FbaB aldolase family. DeoC type 1 subfamily.

The protein resides in the cytoplasm. The enzyme catalyses 2-deoxy-D-ribose 5-phosphate = D-glyceraldehyde 3-phosphate + acetaldehyde. The protein operates within carbohydrate degradation; 2-deoxy-D-ribose 1-phosphate degradation; D-glyceraldehyde 3-phosphate and acetaldehyde from 2-deoxy-alpha-D-ribose 1-phosphate: step 2/2. Its function is as follows. Catalyzes a reversible aldol reaction between acetaldehyde and D-glyceraldehyde 3-phosphate to generate 2-deoxy-D-ribose 5-phosphate. This Exiguobacterium sibiricum (strain DSM 17290 / CCUG 55495 / CIP 109462 / JCM 13490 / 255-15) protein is Deoxyribose-phosphate aldolase.